A 479-amino-acid polypeptide reads, in one-letter code: MSIPRMKSYFSLIAAVLMLGQVATAQAENLPDFTGLVEQASPAVVNISTRQKLPDRAIANQQMPDLEGLPPMLREFLERSMPPGSRPPGAGKGDRQRETQSLGSGFIISPDGYILTNNHVIDGADEILVRLSDRSELKAKLIGTDSRTDVAVLKIDGKDLPTAKLGNSNTLKVGEWVLAIGSPFGFDHSVTKGIVSAKGRSLPNDTYVPFIQTDVAINPGNSGGPLFNMAGEVVGINSQIFTRSGGFMGLSFAIPIDVAMDVANQLKASGKVSRGWLGVVIQEVNKDLAESFGLDKPAGALVAQVLEDGPAAKGGLQVGDVILSANGQPIIMSADLPHLIGNLKDGSKAELEVIRDGKRQKLTVTVGALPDEGQEMGDVAGTGAERSSNRLGVSVIELTAEQKKSLDLKGGVAIKEVTGGPASLIGLQPGDVITHLNNQAITSSKQFTEVAKSLPKDRSVSMRVLRQGRATFITFKLSE.

The first 27 residues, 1-27, serve as a signal peptide directing secretion; sequence MSIPRMKSYFSLIAAVLMLGQVATAQA. Positions 77 to 99 are disordered; the sequence is LERSMPPGSRPPGAGKGDRQRET. Residues H119, D149, and S222 each act as charge relay system in the active site. Substrate-binding positions include 220–222 and 277–281; these read GNS and LGVVI. 2 PDZ domains span residues 266-357 and 363-468; these read LKAS…IRDG and TVTV…LRQG.

This sequence belongs to the peptidase S1C family.

Its subcellular location is the periplasm. The enzyme catalyses Acts on substrates that are at least partially unfolded. The cleavage site P1 residue is normally between a pair of hydrophobic residues, such as Val-|-Val.. In terms of biological role, might be efficient in the degradation of transiently denatured and unfolded proteins which accumulate in the periplasm following stress conditions. This Pseudomonas savastanoi pv. phaseolicola (strain 1448A / Race 6) (Pseudomonas syringae pv. phaseolicola (strain 1448A / Race 6)) protein is Probable periplasmic serine endoprotease DegP-like (mucD).